We begin with the raw amino-acid sequence, 69 residues long: Microcin H47 immunity protein MchI (69 aa).

The Cytoplasmic segment spans residues 1-6; it reads MSYKKL. Residues 7–29 traverse the membrane as a helical segment; the sequence is YQLTAIFSLPLTILLVSLSSLRI. At 30–38 the chain is on the periplasmic side; the sequence is VGEGNSYVD. Residues 39–61 form a helical membrane-spanning segment; the sequence is VFLSFIIFLGFIELIHGIRKILV. The Cytoplasmic portion of the chain corresponds to 62–69; the sequence is WSGWKNGS.

The protein localises to the cell membrane. Its function is as follows. Protects a microcin H47-producer cell against microcin H47. This Escherichia coli protein is Microcin H47 immunity protein MchI (mchI).